The chain runs to 319 residues: Fructokinase (319 aa).

This sequence belongs to the carbohydrate kinase PfkB family. Expressed in swelling stolons and, at higher levels, in developing tubers. Low levels found in leaves and stems from tuberizing plants.

It catalyses the reaction D-fructose + ATP = D-fructose 6-phosphate + ADP + H(+). It functions in the pathway glycan biosynthesis; starch biosynthesis. Its function is as follows. May play an important role in maintaining the flux of carbon towards starch formation. This chain is Fructokinase, found in Solanum tuberosum (Potato).